Reading from the N-terminus, the 370-residue chain is Small ribosomal subunit biogenesis GTPase RsgA 1 (370 aa).

In terms of domain architecture, CP-type G spans 97 to 255 (QTQLDRPPIA…LADTPGFNQP (159 aa)). GTP is bound by residues 146-149 (NKSD) and 197-205 (GPSGVGKSS). Cys-280, Cys-285, His-287, and Cys-293 together coordinate Zn(2+). Residues 325-370 (PESTLKLKTKGKGQSQYEPKLESKKYRRTSRRTQVQGLQDLYQEEE) are disordered.

This sequence belongs to the TRAFAC class YlqF/YawG GTPase family. RsgA subfamily. As to quaternary structure, monomer. Associates with 30S ribosomal subunit, binds 16S rRNA. It depends on Zn(2+) as a cofactor.

Its subcellular location is the cytoplasm. One of several proteins that assist in the late maturation steps of the functional core of the 30S ribosomal subunit. Helps release RbfA from mature subunits. May play a role in the assembly of ribosomal proteins into the subunit. Circularly permuted GTPase that catalyzes slow GTP hydrolysis, GTPase activity is stimulated by the 30S ribosomal subunit. The sequence is that of Small ribosomal subunit biogenesis GTPase RsgA 1 from Nostoc sp. (strain PCC 7120 / SAG 25.82 / UTEX 2576).